Here is a 257-residue protein sequence, read N- to C-terminus: Dihydroorotate dehydrogenase B (NAD(+)), electron transfer subunit (257 aa).

One can recognise an FAD-binding FR-type domain in the interval 2–102 (MKQEQMTVVR…LGPLGNGFPL (101 aa)). Residues 53-56 (RPLS), 70-72 (IYR), and 77-78 (GT) each bind FAD. [2Fe-2S] cluster is bound by residues Cys-221, Cys-226, Cys-229, and Cys-244.

This sequence belongs to the PyrK family. In terms of assembly, heterotetramer of 2 PyrK and 2 PyrD type B subunits. [2Fe-2S] cluster serves as cofactor. Requires FAD as cofactor.

The protein operates within pyrimidine metabolism; UMP biosynthesis via de novo pathway; orotate from (S)-dihydroorotate (NAD(+) route): step 1/1. Responsible for channeling the electrons from the oxidation of dihydroorotate from the FMN redox center in the PyrD type B subunit to the ultimate electron acceptor NAD(+). The polypeptide is Dihydroorotate dehydrogenase B (NAD(+)), electron transfer subunit (Geobacillus sp. (strain WCH70)).